A 151-amino-acid chain; its full sequence is Prefoldin subunit alpha (151 aa).

A disordered region spans residues 120–151 (TVEEETASLEEKAQQAQQQQMQQLQQMQQEDE). Low complexity predominate over residues 133 to 151 (QQAQQQQMQQLQQMQQEDE).

Belongs to the prefoldin subunit alpha family. Heterohexamer of two alpha and four beta subunits.

Its subcellular location is the cytoplasm. Its function is as follows. Molecular chaperone capable of stabilizing a range of proteins. Seems to fulfill an ATP-independent, HSP70-like function in archaeal de novo protein folding. The sequence is that of Prefoldin subunit alpha from Natronomonas pharaonis (strain ATCC 35678 / DSM 2160 / CIP 103997 / JCM 8858 / NBRC 14720 / NCIMB 2260 / Gabara) (Halobacterium pharaonis).